The primary structure comprises 153 residues: Large ribosomal subunit protein uL30 (153 aa).

Belongs to the universal ribosomal protein uL30 family. As to quaternary structure, part of the 50S ribosomal subunit.

The protein is Large ribosomal subunit protein uL30 of Methanoculleus marisnigri (strain ATCC 35101 / DSM 1498 / JR1).